The following is a 306-amino-acid chain: Acyl transferase (306 aa).

Catalysis depends on charge relay system residues Ser117, Asp214, and His244.

It belongs to the LuxD family.

The protein operates within lipid metabolism; fatty acid reduction for biolumincescence. Functionally, acyl transferase is part of the fatty acid reductase system required for aldehyde biosynthesis; it produces fatty acids for the luminescent reaction. The sequence is that of Acyl transferase from Photobacterium phosphoreum.